Reading from the N-terminus, the 328-residue chain is Malate dehydrogenase (328 aa).

Residue 11 to 17 (GAAGQIG) coordinates NAD(+). Residues R94 and R100 each contribute to the substrate site. Residues N107, Q114, and 131–133 (VGN) contribute to the NAD(+) site. Substrate is bound by residues N133 and R164. H189 (proton acceptor) is an active-site residue.

Belongs to the LDH/MDH superfamily. MDH type 2 family.

The enzyme catalyses (S)-malate + NAD(+) = oxaloacetate + NADH + H(+). Catalyzes the reversible oxidation of malate to oxaloacetate. This Acinetobacter baylyi (strain ATCC 33305 / BD413 / ADP1) protein is Malate dehydrogenase.